The following is a 660-amino-acid chain: GTP-binding protein BRASSINAZOLE INSENSITIVE PALE GREEN 2, chloroplastic (660 aa).

The N-terminal 53 residues, 1–53, are a transit peptide targeting the chloroplast; sequence MVVLISSTVTICNVKPKLEDGNFRVSRLIHRPEVPFFSGLSNEKKKKCAVSVM. 2 disordered regions span residues 127 to 158 and 191 to 212; these read EGDEHVENDELAGFEMVDDDADEEEEGEDDEM and NDVELDGFAPAGVGYGNVTEEK. Acidic residues predominate over residues 130-158; sequence EHVENDELAGFEMVDDDADEEEEGEDDEM. The region spanning 273 to 457 is the CP-type G domain; the sequence is STRLIKPMSN…MYDTPGLLHP (185 aa).

Belongs to the TRAFAC class YlqF/YawG GTPase family. In terms of assembly, binds to chloroplast 16S and 23S ribosomal RNAs. As to expression, mostly expressed in stems, petioles, leaves and flowers and, at low levels, also in roots.

It localises to the plastid. Its subcellular location is the chloroplast stroma. Required for brassinosteroid- (BR) mediated post-transcriptional and translational regulation in the chloroplast, including accumulation of chloroplast rRNA. Involved in chloroplast differentiation. The polypeptide is GTP-binding protein BRASSINAZOLE INSENSITIVE PALE GREEN 2, chloroplastic (Arabidopsis thaliana (Mouse-ear cress)).